The sequence spans 473 residues: Ras-GEF domain-containing family member 1B (473 aa).

Residues 34-164 (HDNNLLSGSL…QMMQCLIRKL (131 aa)) form the N-terminal Ras-GEF domain. The Ras-GEF domain maps to 204–452 (NDPYTLAQQL…LYLASYESEG (249 aa)).

Interacts with Ras family proteins. Interacts with CCDC124 during cytokinesis.

The protein resides in the early endosome. Its subcellular location is the late endosome. The protein localises to the midbody. Guanine nucleotide exchange factor (GEF) with specificity for RAP2A, it doesn't seems to activate other Ras family proteins (in vitro). The protein is Ras-GEF domain-containing family member 1B (RASGEF1B) of Homo sapiens (Human).